Reading from the N-terminus, the 600-residue chain is Aspartate--tRNA(Asp/Asn) ligase (600 aa).

E187 is a binding site for L-aspartate. The tract at residues 211–214 is aspartate; it reads QIFK. 2 residues coordinate L-aspartate: R233 and H463. 233-235 is an ATP binding site; the sequence is RDE. ATP is bound at residue E497. R504 contributes to the L-aspartate binding site. Position 549-552 (549-552) interacts with ATP; the sequence is GVDR.

Belongs to the class-II aminoacyl-tRNA synthetase family. Type 1 subfamily. As to quaternary structure, homodimer.

Its subcellular location is the cytoplasm. The catalysed reaction is tRNA(Asx) + L-aspartate + ATP = L-aspartyl-tRNA(Asx) + AMP + diphosphate. Aspartyl-tRNA synthetase with relaxed tRNA specificity since it is able to aspartylate not only its cognate tRNA(Asp) but also tRNA(Asn). Reaction proceeds in two steps: L-aspartate is first activated by ATP to form Asp-AMP and then transferred to the acceptor end of tRNA(Asp/Asn). This is Aspartate--tRNA(Asp/Asn) ligase from Wolbachia sp. subsp. Drosophila simulans (strain wRi).